The following is a 215-amino-acid chain: Kunitz trypsin inhibitor 2 (215 aa).

Positions 1 to 23 are cleaved as a signal peptide; sequence MKNPSVISFLIILLFAATICTHG. C67 and C114 are disulfide-bonded. N145 is a glycosylation site (N-linked (GlcNAc...) asparagine).

This sequence belongs to the protease inhibitor I3 (leguminous Kunitz-type inhibitor) family. Interacts with RD21A. Interacts with RD21B and RD21C. In terms of tissue distribution, expressed in vascular bundles of the carpels, the transmitting tract of the style and septum epidermis. Expressed in etiolated seedlings.

It is found in the secreted. The protein localises to the cell wall. It localises to the extracellular space. Its subcellular location is the apoplast. The protein resides in the endoplasmic reticulum. In terms of biological role, water-soluble and chlorophyll-binding protein that probably does not function as a chloroplast chlorophyll carrier and is not involved in photosynthesis. Involved in the control of cell death in the transmitting tract and septum epidermis during flower development. Binds and inhibits the activity of the cysteine protease RD21A as a pro-death protein. May play a role in herbivore resistance activation during seedling greening. This Arabidopsis thaliana (Mouse-ear cress) protein is Kunitz trypsin inhibitor 2.